Here is a 374-residue protein sequence, read N- to C-terminus: Isopentenyl-diphosphate delta-isomerase (374 aa).

13 to 14 (RK) provides a ligand contact to substrate. FMN-binding positions include 71-73 (GMT), Ser-104, and Asn-132. 104 to 106 (SQR) is a substrate binding site. Gln-171 lines the substrate pocket. Position 172 (Glu-172) interacts with Mg(2+). FMN is bound by residues Lys-203, Thr-233, 282-284 (GMR), and 303-304 (AL).

It belongs to the IPP isomerase type 2 family. In terms of assembly, homooctamer. Dimer of tetramers. FMN is required as a cofactor. The cofactor is NADPH. It depends on Mg(2+) as a cofactor.

It localises to the cytoplasm. The catalysed reaction is isopentenyl diphosphate = dimethylallyl diphosphate. Involved in the biosynthesis of isoprenoids. Catalyzes the 1,3-allylic rearrangement of the homoallylic substrate isopentenyl (IPP) to its allylic isomer, dimethylallyl diphosphate (DMAPP). This chain is Isopentenyl-diphosphate delta-isomerase, found in Thermococcus onnurineus (strain NA1).